The following is a 72-amino-acid chain: MGAKKNLLAELREKSSEELDEFIRDNKKALFALRAEAALQNKVVKTHQFSLYKKSIARALIIKQEKKDRVHG.

It belongs to the universal ribosomal protein uL29 family.

This Chlamydia trachomatis serovar L2 (strain ATCC VR-902B / DSM 19102 / 434/Bu) protein is Large ribosomal subunit protein uL29.